The sequence spans 395 residues: Tyrosine--tRNA ligase (395 aa).

Positions 42–51 match the 'HIGH' region motif; it reads PTAPDIHLGH. A 'KMSKS' region motif is present at residues 226-230; it reads KMSKS. Lysine 229 provides a ligand contact to ATP. The region spanning 334–394 is the S4 RNA-binding domain; it reads IGLATLLKEA…GKRKFARVTV (61 aa).

This sequence belongs to the class-I aminoacyl-tRNA synthetase family. TyrS type 2 subfamily. As to quaternary structure, homodimer.

Its subcellular location is the cytoplasm. The enzyme catalyses tRNA(Tyr) + L-tyrosine + ATP = L-tyrosyl-tRNA(Tyr) + AMP + diphosphate + H(+). Functionally, catalyzes the attachment of tyrosine to tRNA(Tyr) in a two-step reaction: tyrosine is first activated by ATP to form Tyr-AMP and then transferred to the acceptor end of tRNA(Tyr). This chain is Tyrosine--tRNA ligase, found in Haemophilus influenzae (strain 86-028NP).